Reading from the N-terminus, the 270-residue chain is Tetraspanin-14 (270 aa).

Residues 1–17 lie on the Cytoplasmic side of the membrane; the sequence is MHYYRYSNAEVSCWYKY. Residues 18–38 form a helical membrane-spanning segment; that stretch reads LLFSYNIVFWLAGVVFLGVGL. At 39 to 61 the chain is on the extracellular side; that stretch reads WAWSEKGVLSDLTKVTRLHGIDP. Residues 62-82 form a helical membrane-spanning segment; it reads VVLVLMVGVVMFTLGFAGCVG. Residues 83–92 lie on the Cytoplasmic side of the membrane; sequence ALRENICLLK. A helical transmembrane segment spans residues 93–113; that stretch reads FFCGAIVLIFFLELAVAVLAF. Residues 114 to 232 are Extracellular-facing; it reads LFQDWVRDRF…QALEGWLPRN (119 aa). The tract at residues 114-232 is necessary and sufficient for interaction with ADAM10; sequence LFQDWVRDRF…QALEGWLPRN (119 aa). 4 cysteine pairs are disulfide-bonded: Cys-153-Cys-221, Cys-154-Cys-186, Cys-170-Cys-180, and Cys-187-Cys-200. Residue Asn-169 is glycosylated (N-linked (GlcNAc...) asparagine). A helical membrane pass occupies residues 233-253; it reads IYIVAGVFIAISLLQIFGIFL. At 254–270 the chain is on the cytoplasmic side; sequence ARTLISDIEAVKAGHHF.

The protein belongs to the tetraspanin (TM4SF) family. As to quaternary structure, interacts with ADAM10; the interaction promotes ADAM10 maturation and cell surface expression.

Its subcellular location is the cell membrane. In terms of biological role, part of TspanC8 subgroup, composed of 6 members that interact with the transmembrane metalloprotease ADAM10. This interaction is required for ADAM10 exit from the endoplasmic reticulum and for enzymatic maturation and trafficking to the cell surface as well as substrate specificity. Different TspanC8/ADAM10 complexes have distinct substrates. Negatively regulates ADAM10-mediated cleavage of GP6. Promotes ADAM10-mediated cleavage of CDH5. The polypeptide is Tetraspanin-14 (Tspan14) (Mus musculus (Mouse)).